We begin with the raw amino-acid sequence, 511 residues long: 2'-5'-oligoadenylate synthase-like protein 1 (511 aa).

Ubiquitin-like domains are found at residues 350 to 429 (IQVT…ISPE) and 430 to 506 (IQVF…EGAA).

The protein belongs to the 2-5A synthase family. Specifically interacts with the ligand binding domain of the thyroid receptor (TR). TRIP14 does not require the presence of thyroid hormone for its interaction. Binds MBD1.

The protein resides in the nucleus. It is found in the nucleolus. Its subcellular location is the cytoplasm. Functionally, does not have 2'-5'-OAS activity, but can bind double-stranded RNA. Displays antiviral activity via an alternative antiviral pathway independent of RNase L. The sequence is that of 2'-5'-oligoadenylate synthase-like protein 1 (Oasl1) from Mus musculus (Mouse).